The primary structure comprises 406 residues: Biofilm regulatory protein A (406 aa).

The N-terminal stretch at 1 to 26 is a signal peptide; the sequence is MKIGKKILIMLVTIFLTSLVALGVYA. Residues 347-397 show a composition bias toward low complexity; sequence SSSASDYSSSGNYSGSSSDYGSSSSYGSNSSSGSSSDYSGQNSYNQGNYQQ. A disordered region spans residues 347–406; that stretch reads SSSASDYSSSGNYSGSSSDYGSSSSYGSNSSSGSSSDYSGQNSYNQGNYQQPAAGTGIGN.

The protein belongs to the LytR/CpsA/Psr (LCP) family.

It localises to the cell envelope. Functionally, involved in biofilm formation, cell division, autolysis and the regulation of acid and oxidative stress tolerance. May be associated with systemic virulence in blood. The chain is Biofilm regulatory protein A (brpA) from Streptococcus mutans serotype c (strain ATCC 700610 / UA159).